Here is a 259-residue protein sequence, read N- to C-terminus: Deoxyribose-phosphate aldolase (259 aa).

Catalysis depends on Asp101, which acts as the Proton donor/acceptor. Lys166 serves as the catalytic Schiff-base intermediate with acetaldehyde. Lys200 acts as the Proton donor/acceptor in catalysis.

It belongs to the DeoC/FbaB aldolase family. DeoC type 2 subfamily.

The protein resides in the cytoplasm. The enzyme catalyses 2-deoxy-D-ribose 5-phosphate = D-glyceraldehyde 3-phosphate + acetaldehyde. The protein operates within carbohydrate degradation; 2-deoxy-D-ribose 1-phosphate degradation; D-glyceraldehyde 3-phosphate and acetaldehyde from 2-deoxy-alpha-D-ribose 1-phosphate: step 2/2. Functionally, catalyzes a reversible aldol reaction between acetaldehyde and D-glyceraldehyde 3-phosphate to generate 2-deoxy-D-ribose 5-phosphate. This is Deoxyribose-phosphate aldolase from Glaesserella parasuis serovar 5 (strain SH0165) (Haemophilus parasuis).